Consider the following 354-residue polypeptide: Holliday junction branch migration complex subunit RuvB (354 aa).

The tract at residues 5 to 197 is large ATPase domain (RuvB-L); that stretch reads TDDFSAADLP…FGIVARLEFY (193 aa). ATP is bound by residues L36, R37, G78, K81, T82, T83, 144 to 146, R187, Y197, and R234; that span reads EDY. T82 serves as a coordination point for Mg(2+). The tract at residues 198–268 is small ATPAse domain (RuvB-S); that stretch reads TAEELGRIVR…IANKALAMLD (71 aa). Positions 271 to 354 are head domain (RuvB-H); sequence PQGFDVMDRK…PPVSGNDMFT (84 aa). 3 residues coordinate DNA: R307, R326, and R331.

The protein belongs to the RuvB family. In terms of assembly, homohexamer. Forms an RuvA(8)-RuvB(12)-Holliday junction (HJ) complex. HJ DNA is sandwiched between 2 RuvA tetramers; dsDNA enters through RuvA and exits via RuvB. An RuvB hexamer assembles on each DNA strand where it exits the tetramer. Each RuvB hexamer is contacted by two RuvA subunits (via domain III) on 2 adjacent RuvB subunits; this complex drives branch migration. In the full resolvosome a probable DNA-RuvA(4)-RuvB(12)-RuvC(2) complex forms which resolves the HJ.

It localises to the cytoplasm. It catalyses the reaction ATP + H2O = ADP + phosphate + H(+). In terms of biological role, the RuvA-RuvB-RuvC complex processes Holliday junction (HJ) DNA during genetic recombination and DNA repair, while the RuvA-RuvB complex plays an important role in the rescue of blocked DNA replication forks via replication fork reversal (RFR). RuvA specifically binds to HJ cruciform DNA, conferring on it an open structure. The RuvB hexamer acts as an ATP-dependent pump, pulling dsDNA into and through the RuvAB complex. RuvB forms 2 homohexamers on either side of HJ DNA bound by 1 or 2 RuvA tetramers; 4 subunits per hexamer contact DNA at a time. Coordinated motions by a converter formed by DNA-disengaged RuvB subunits stimulates ATP hydrolysis and nucleotide exchange. Immobilization of the converter enables RuvB to convert the ATP-contained energy into a lever motion, pulling 2 nucleotides of DNA out of the RuvA tetramer per ATP hydrolyzed, thus driving DNA branch migration. The RuvB motors rotate together with the DNA substrate, which together with the progressing nucleotide cycle form the mechanistic basis for DNA recombination by continuous HJ branch migration. Branch migration allows RuvC to scan DNA until it finds its consensus sequence, where it cleaves and resolves cruciform DNA. This is Holliday junction branch migration complex subunit RuvB from Polaromonas sp. (strain JS666 / ATCC BAA-500).